Reading from the N-terminus, the 313-residue chain is Acetyl-coenzyme A carboxylase carboxyl transferase subunit alpha (313 aa).

The 251-residue stretch at 36–286 folds into the CoA carboxyltransferase C-terminal domain; it reads RLDKEVKTIY…KEYFLDTLRT (251 aa).

The protein belongs to the AccA family. As to quaternary structure, acetyl-CoA carboxylase is a heterohexamer composed of biotin carboxyl carrier protein (AccB), biotin carboxylase (AccC) and two subunits each of ACCase subunit alpha (AccA) and ACCase subunit beta (AccD).

The protein localises to the cytoplasm. The enzyme catalyses N(6)-carboxybiotinyl-L-lysyl-[protein] + acetyl-CoA = N(6)-biotinyl-L-lysyl-[protein] + malonyl-CoA. Its pathway is lipid metabolism; malonyl-CoA biosynthesis; malonyl-CoA from acetyl-CoA: step 1/1. In terms of biological role, component of the acetyl coenzyme A carboxylase (ACC) complex. First, biotin carboxylase catalyzes the carboxylation of biotin on its carrier protein (BCCP) and then the CO(2) group is transferred by the carboxyltransferase to acetyl-CoA to form malonyl-CoA. This is Acetyl-coenzyme A carboxylase carboxyl transferase subunit alpha from Helicobacter acinonychis (strain Sheeba).